We begin with the raw amino-acid sequence, 226 residues long: 7-cyano-7-deazaguanine synthase (226 aa).

8-18 is an ATP binding site; sequence ISGGLDSTTCL. Zn(2+) is bound by residues cysteine 188, cysteine 198, cysteine 201, and cysteine 204.

This sequence belongs to the QueC family. Zn(2+) is required as a cofactor.

It catalyses the reaction 7-carboxy-7-deazaguanine + NH4(+) + ATP = 7-cyano-7-deazaguanine + ADP + phosphate + H2O + H(+). Its pathway is purine metabolism; 7-cyano-7-deazaguanine biosynthesis. In terms of biological role, catalyzes the ATP-dependent conversion of 7-carboxy-7-deazaguanine (CDG) to 7-cyano-7-deazaguanine (preQ(0)). The sequence is that of 7-cyano-7-deazaguanine synthase from Coxiella burnetii (strain RSA 331 / Henzerling II).